Reading from the N-terminus, the 63-residue chain is Protein DsrB (63 aa).

It belongs to the DsrB family.

This chain is Protein DsrB, found in Yersinia pseudotuberculosis serotype O:3 (strain YPIII).